Reading from the N-terminus, the 313-residue chain is Ribosomal RNA small subunit methyltransferase H (313 aa).

Residues Gly34 to His36, Asp54, Phe81, Asp102, and Gln109 each bind S-adenosyl-L-methionine. Residues Ile289 to Gly313 are disordered.

The protein belongs to the methyltransferase superfamily. RsmH family.

It is found in the cytoplasm. It catalyses the reaction cytidine(1402) in 16S rRNA + S-adenosyl-L-methionine = N(4)-methylcytidine(1402) in 16S rRNA + S-adenosyl-L-homocysteine + H(+). In terms of biological role, specifically methylates the N4 position of cytidine in position 1402 (C1402) of 16S rRNA. In Trichlorobacter lovleyi (strain ATCC BAA-1151 / DSM 17278 / SZ) (Geobacter lovleyi), this protein is Ribosomal RNA small subunit methyltransferase H.